An 88-amino-acid chain; its full sequence is Small ribosomal subunit protein uS15 (88 aa).

Belongs to the universal ribosomal protein uS15 family. In terms of assembly, part of the 30S ribosomal subunit. Forms a bridge to the 50S subunit in the 70S ribosome, contacting the 23S rRNA.

Its function is as follows. One of the primary rRNA binding proteins, it binds directly to 16S rRNA where it helps nucleate assembly of the platform of the 30S subunit by binding and bridging several RNA helices of the 16S rRNA. Forms an intersubunit bridge (bridge B4) with the 23S rRNA of the 50S subunit in the ribosome. This is Small ribosomal subunit protein uS15 from Paracidovorax citrulli (strain AAC00-1) (Acidovorax citrulli).